A 60-amino-acid chain; its full sequence is Large ribosomal subunit protein bL32 (60 aa).

The tract at residues 1–21 is disordered; sequence MAVPRNRHSNARKNIRRSHDA.

The protein belongs to the bacterial ribosomal protein bL32 family.

The protein is Large ribosomal subunit protein bL32 of Chlamydia felis (strain Fe/C-56) (Chlamydophila felis).